The chain runs to 282 residues: Tail needle protein (282 aa).

Residues 2-60 (ADSNLNVPVIIQATRLDTSVLPRNIFSQSYLLYVIAQGTDVGNVANKANEAGQGAYDAQ) form an interaction with tail hub protein region. Trimerization heptad repeat repeat units follow at residues 61 to 67 (VRNDEQD), 70 to 76 (LADHEQR), 77 to 83 (ISAAEAT), 84 to 90 (LVNHEER), 91 to 97 (IRQAEST), 98 to 104 (LQDHETR), 105 to 111 (IAQNESD), 112 to 118 (ISSLDTR), 119 to 125 (VQSLESQ), 126 to 132 (VSDHETR), and 133 to 139 (IDALEYA). Positions 61–139 (VRNDEQDVIL…ETRIDALEYA (79 aa)) form a coiled coil. The tract at residues 132 to 282 (RIDALEYATT…ATTIKIIAEQ (151 aa)) is C-terminal globular knob. Glu146, Lys200, Ser248, Asp250, Leu255, and Lys277 together coordinate L-glutamate.

This sequence belongs to the Lederbergvirus tail needle protein family. In terms of assembly, homotrimer. The trimer forms an elongated coiled-coil (280A x 25A). he N-terminal tip may exist in a pre-ejection extended conformation, which may fold into a trimer of hairpins only after ejection into the host. Interacts with the tail hub. Interacts with the head-to-tail adapter protein.

Its subcellular location is the virion. Cell-perforating component and plug protein of the phage tail machine. Together with the internal ejection proteins is required for stabilization of the condensed DNA within the capsid by plugging the hole through which the DNA enters. Host cell membrane perforation allows viral DNA ejection. The needle penetrates the host outer membrane. The needle is released and the internal head protein gp7 is ejected to form an extra-cellular channel. The chain is Tail needle protein (9) from Shigella phage Sf6 (Shigella flexneri bacteriophage VI).